The primary structure comprises 423 residues: Glutamate-1-semialdehyde 2,1-aminomutase (423 aa).

An N6-(pyridoxal phosphate)lysine modification is found at lysine 259.

The protein belongs to the class-III pyridoxal-phosphate-dependent aminotransferase family. HemL subfamily. The cofactor is pyridoxal 5'-phosphate.

The protein localises to the cytoplasm. The enzyme catalyses (S)-4-amino-5-oxopentanoate = 5-aminolevulinate. Its pathway is porphyrin-containing compound metabolism; protoporphyrin-IX biosynthesis; 5-aminolevulinate from L-glutamyl-tRNA(Glu): step 2/2. The polypeptide is Glutamate-1-semialdehyde 2,1-aminomutase (Methanobrevibacter smithii (strain ATCC 35061 / DSM 861 / OCM 144 / PS)).